Consider the following 473-residue polypeptide: 3-isopropylmalate dehydratase large subunit (473 aa).

[4Fe-4S] cluster is bound by residues C354, C414, and C417. The interval 425–448 (LAPGQRSASTSNRNFEGRQGRGGR) is disordered.

It belongs to the aconitase/IPM isomerase family. LeuC type 1 subfamily. In terms of assembly, heterodimer of LeuC and LeuD. [4Fe-4S] cluster is required as a cofactor.

The enzyme catalyses (2R,3S)-3-isopropylmalate = (2S)-2-isopropylmalate. Its pathway is amino-acid biosynthesis; L-leucine biosynthesis; L-leucine from 3-methyl-2-oxobutanoate: step 2/4. In terms of biological role, catalyzes the isomerization between 2-isopropylmalate and 3-isopropylmalate, via the formation of 2-isopropylmaleate. This Acidothermus cellulolyticus (strain ATCC 43068 / DSM 8971 / 11B) protein is 3-isopropylmalate dehydratase large subunit.